A 237-amino-acid chain; its full sequence is Phosphoribosylaminoimidazole-succinocarboxamide synthase (237 aa).

The protein belongs to the SAICAR synthetase family.

The enzyme catalyses 5-amino-1-(5-phospho-D-ribosyl)imidazole-4-carboxylate + L-aspartate + ATP = (2S)-2-[5-amino-1-(5-phospho-beta-D-ribosyl)imidazole-4-carboxamido]succinate + ADP + phosphate + 2 H(+). It functions in the pathway purine metabolism; IMP biosynthesis via de novo pathway; 5-amino-1-(5-phospho-D-ribosyl)imidazole-4-carboxamide from 5-amino-1-(5-phospho-D-ribosyl)imidazole-4-carboxylate: step 1/2. The chain is Phosphoribosylaminoimidazole-succinocarboxamide synthase from Marinobacter nauticus (strain ATCC 700491 / DSM 11845 / VT8) (Marinobacter aquaeolei).